Reading from the N-terminus, the 109-residue chain is Large ribosomal subunit protein uL22 (109 aa).

It belongs to the universal ribosomal protein uL22 family. Part of the 50S ribosomal subunit.

Functionally, this protein binds specifically to 23S rRNA; its binding is stimulated by other ribosomal proteins, e.g. L4, L17, and L20. It is important during the early stages of 50S assembly. It makes multiple contacts with different domains of the 23S rRNA in the assembled 50S subunit and ribosome. Its function is as follows. The globular domain of the protein is located near the polypeptide exit tunnel on the outside of the subunit, while an extended beta-hairpin is found that lines the wall of the exit tunnel in the center of the 70S ribosome. This chain is Large ribosomal subunit protein uL22, found in Neisseria gonorrhoeae (strain ATCC 700825 / FA 1090).